The sequence spans 4912 residues: Probable E3 ubiquitin-protein ligase HERC2 (4912 aa).

A disordered region spans residues 1 to 67; it reads MFNRQASGGA…GSGSAAPPSH (67 aa). Over residues 8–17 the composition is skewed to gly residues; that stretch reads GGAGSSGQGA. Residues 18–31 show a composition bias toward low complexity; that stretch reads GSSQTASAAPVSAG. Composition is skewed to gly residues over residues 32–41 and 49–59; these read VGVGGGGGAS and SAAGSGSGSGS. RCC1 repeat units follow at residues 634-685, 686-739, 741-789, 791-843, and 844-897; these read NHNA…AITC, GGNL…ALTS, GLVF…ALSS, GQLY…ALSS, and SGEV…VWTQ. 3 disordered regions span residues 1102–1129, 1428–1475, and 1659–1681; these read RLSP…STSP, QLLQ…PGRG, and QEQE…EEET. The segment covering 1446 to 1458 has biased composition (polar residues); it reads SHSCHSTAGNTPT. At Thr-1776 the chain carries Phosphothreonine. Residues 1917–1990 enclose the MIB/HERC2 domain; that stretch reads SGPDLAKLMK…QYDLQLADSA (74 aa). Disordered stretches follow at residues 1994–2018 and 2381–2412; these read ASPT…SHPS and GSIY…SGSG. Positions 2396 to 2412 are enriched in polar residues; it reads ESQQPGEQDQQLSSGSG. A UBA domain is found at 2511–2557; sequence ATDAQLIGQIMEMGFTRRTVELALKQLSLQAEIMPTPEQIVQWILEH. The segment at 2572 to 2620 is disordered; sequence LASSASSHDPEADSDNECPSSNSTTSSSTSSDTVEGQPMAVSGPAPPVK. Residues 2591–2604 are compositionally biased toward low complexity; the sequence is SSNSTTSSSTSSDT. Residues 2624 to 2699 form the CPH domain; that stretch reads RKDFQTADLY…VCFVHIELVE (76 aa). A DOC domain is found at 2780 to 2958; it reads TSATLPSLGD…FLASEYSAGV (179 aa). RCC1 repeat units lie at residues 2985 to 3036, 3037 to 3090, 3091 to 3142, 3144 to 3194, 3197 to 3248, 3250 to 3300, and 3302 to 3352; these read PCTV…IVSQ, DGKV…ALTL, DGKV…AISS, GELY…TLAL, DGAV…ALTR, GEVW…AVTD, and GQVY…AWGL. Disordered regions lie at residues 3352–3374 and 3953–4000; these read LPNA…RDPL and LPSS…EQPD. The segment covering 3974-3988 has biased composition (low complexity); it reads LNSTTSLSSSTVSNV. RCC1 repeat units follow at residues 4049-4099, 4101-4153, 4155-4205, 4207-4259, 4261-4311, 4313-4363, and 4365-4415; these read STIY…AVTP, GKLF…ALTT, GEVY…AITA, GHVL…CITD, DNVW…ALTK, GAVY…ACSD, and GEVY…ALST. The HECT domain maps to 4547 to 4882; the sequence is ALALPHRVWK…IHFCKSIDTD (336 aa). Residue Cys-4850 is the Glycyl thioester intermediate of the active site. The segment at 4891–4912 is disordered; the sequence is EPTEATGSEDNSDLESVASHEG.

Its subcellular location is the cytoplasm. It localises to the cytoskeleton. The protein resides in the microtubule organizing center. It is found in the centrosome. The protein localises to the centriole. It carries out the reaction S-ubiquitinyl-[E2 ubiquitin-conjugating enzyme]-L-cysteine + [acceptor protein]-L-lysine = [E2 ubiquitin-conjugating enzyme]-L-cysteine + N(6)-ubiquitinyl-[acceptor protein]-L-lysine.. It functions in the pathway protein modification; protein ubiquitination. Its function is as follows. Probable E3 ubiquitin-protein ligase which accepts ubiquitin from an E2 ubiquitin-conjugating enzyme in the form of a thioester and then directly transfers the ubiquitin to targeted substrates. The sequence is that of Probable E3 ubiquitin-protein ligase HERC2 (HERC2) from Drosophila melanogaster (Fruit fly).